The primary structure comprises 547 residues: Tripartite motif-containing protein 5 (547 aa).

At Ala2 the chain carries N-acetylalanine. The segment at 15–59 (CPICLELLTEPLSLDCGHSFCQACITANHKESTLHQGERSCPLCR) adopts an RING-type zinc-finger fold. Position 86 is a phosphoserine (Ser86). A B box-type zinc finger spans residues 91 to 132 (QKVDRCARHGEKLLLFCQQHGNVICWLCERSQEHRGHSTFLV). Zn(2+) is bound by residues Cys96, His99, Cys118, and His124. Residues 132-225 (VEEVAQKYQE…AQSENDMVLQ (94 aa)) adopt a coiled-coil conformation. The segment at 186–199 (FKQLRDILDCEESN) is required for interaction with GABARAP and for autophagy. Residues 280 to 547 (PDLKGMLQVF…LPMTLCSPSS (268 aa)) enclose the B30.2/SPRY domain.

The protein belongs to the TRIM/RBCC family. As to quaternary structure, can form homodimers and homotrimers. In addition to lower-order dimerization, also exhibits a higher-order multimerization and both low- and high-order multimerizations are essential for its restriction activity. Interacts with BTBD1 and BTBD2. Interacts with PSMC4, PSMC5, PSMD7 and HSPA8/HSC70. Interacts (via B30.2/SPRY domain) with HSPA1A/B. Interacts with PSMC2, MAP3K7/TAK1, TAB2 and TAB3. Interacts with SQSTM1. Interacts with TRIM6 and TRIM34. Interacts with ULK1 (phosphorylated form), GABARAP, GABARAPL1, GABARAPL2, MAP1LC3A, MAP1LC3C and BECN1. In terms of processing, degraded in a proteasome-independent fashion in the absence of viral infection but in a proteasome-dependent fashion following exposure to restriction sensitive virus. Post-translationally, autoubiquitinated in a RING finger- and UBE2D2-dependent manner. Monoubiquitinated by TRIM21. Deubiquitinated by Yersinia YopJ. Ubiquitination may not lead to proteasomal degradation.

The protein localises to the cytoplasm. It is found in the nucleus. The enzyme catalyses S-ubiquitinyl-[E2 ubiquitin-conjugating enzyme]-L-cysteine + [acceptor protein]-L-lysine = [E2 ubiquitin-conjugating enzyme]-L-cysteine + N(6)-ubiquitinyl-[acceptor protein]-L-lysine.. It functions in the pathway protein modification; protein ubiquitination. Its function is as follows. Capsid-specific restriction factor that prevents infection from non-host-adapted retroviruses. Blocks viral replication early in the life cycle, after viral entry but before reverse transcription. In addition to acting as a capsid-specific restriction factor, also acts as a pattern recognition receptor that activates innate immune signaling in response to the retroviral capsid lattice. Binding to the viral capsid triggers its E3 ubiquitin ligase activity, and in concert with the heterodimeric ubiquitin conjugating enzyme complex UBE2V1-UBE2N (also known as UBC13-UEV1A complex) generates 'Lys-63'-linked polyubiquitin chains, which in turn are catalysts in the autophosphorylation of the MAP3K7/TAK1 complex (includes TAK1, TAB2, and TAB3). Activation of the MAP3K7/TAK1 complex by autophosphorylation results in the induction and expression of NF-kappa-B and MAPK-responsive inflammatory genes, thereby leading to an innate immune response in the infected cell. Plays a role in regulating autophagy through activation of autophagy regulator BECN1 by causing its dissociation from its inhibitors BCL2 and TAB2. The sequence is that of Tripartite motif-containing protein 5 (TRIM5) from Ateles geoffroyi (Black-handed spider monkey).